We begin with the raw amino-acid sequence, 190 residues long: uncharacterized protein (190 aa).

This is an uncharacterized protein from Archaeoglobus fulgidus (strain ATCC 49558 / DSM 4304 / JCM 9628 / NBRC 100126 / VC-16).